The primary structure comprises 125 residues: Small ribosomal subunit protein eS8 (125 aa).

Residues 1 to 35 (MQWQGRSVRKPSGGRYHTSQGKKRTEIGRAPAETH) form a disordered region.

This sequence belongs to the eukaryotic ribosomal protein eS8 family. As to quaternary structure, part of the 30S ribosomal subunit.

The protein is Small ribosomal subunit protein eS8 of Methanoculleus marisnigri (strain ATCC 35101 / DSM 1498 / JR1).